Consider the following 288-residue polypeptide: Proteasome assembly chaperone 1 (288 aa).

At Ala-2 the chain carries N-acetylalanine. The interval 13 to 35 (PCRAGTEDEEEEEEGRRETPEDR) is disordered. Thr-18 is subject to Phosphothreonine. Residues 26–35 (EGRRETPEDR) are compositionally biased toward basic and acidic residues. Thr-54 is subject to Phosphothreonine. Ser-180 is subject to Phosphoserine. An N6-acetyllysine modification is found at Lys-264.

It belongs to the PSMG1 family. In terms of assembly, forms a heterodimer with PSMG2. The PSMG1-PSMG2 heterodimer interacts directly with the PSMA5 and PSMA7 proteasome alpha subunits. Post-translationally, degraded by the proteasome upon completion of 20S proteasome maturation. As to expression, in the adult, detected in brain, colon, leukocytes, breast and testis. Widely expressed in the fetus. Also expressed in a variety of proliferating cell lines.

It localises to the cytoplasm. The protein localises to the endoplasmic reticulum. Functionally, chaperone protein which promotes assembly of the 20S proteasome as part of a heterodimer with PSMG2. The PSMG1-PSMG2 heterodimer binds to the PSMA5 and PSMA7 proteasome subunits, promotes assembly of the proteasome alpha subunits into the heteroheptameric alpha ring and prevents alpha ring dimerization. This Homo sapiens (Human) protein is Proteasome assembly chaperone 1.